Here is a 428-residue protein sequence, read N- to C-terminus: MPKDKPHVNIVFIGHVDHGKSTTIGRLLYDTGNIPEQIIKKFEEMGEKGKSFKFAWVMDRLKEERERGITIDVAHTKFETPHRYITIIDAPGHRDFVKNMITGASQADAAVLVVAATDGVMPQTKEHAFLARTLGIKHIIVAINKMDMVNYNQKRFEEVKAQVEKLLKMLGYKDFPVIPISAWEGENVVKKSDKMPWYNGPTLIEALDQIPEPEKPVDKPLRIPIQDVYSIKGVGTVPVGRVETGKLRVGEVVIFEPASTIFHKPIQGEVKSIEMHHEPLEEALPGDNIGFNVRGVSKNDIKRGDVAGHTTNPPTVVRTKDTFKAQIIVLNHPTAITVGYSPVLHAHTAQVPVRFEQLLAKLDPKTGNIVEENPQFIKTGDAAIVILRPMKPVVLEPVKEIPQLGRFAIRDMGMTIAAGMVISIQRGE.

Positions 5-217 constitute a tr-type G domain; sequence KPHVNIVFIG…DQIPEPEKPV (213 aa). The tract at residues 14–21 is G1; it reads GHVDHGKS. 14–21 lines the GTP pocket; the sequence is GHVDHGKS. Serine 21 is a Mg(2+) binding site. The G2 stretch occupies residues 68-72; sequence GITID. The segment at 89 to 92 is G3; sequence DAPG. GTP-binding positions include 89 to 93 and 144 to 147; these read DAPGH and NKMD. Positions 144–147 are G4; that stretch reads NKMD. The segment at 181 to 183 is G5; sequence SAW.

Belongs to the TRAFAC class translation factor GTPase superfamily. Classic translation factor GTPase family. EF-Tu/EF-1A subfamily.

It localises to the cytoplasm. It carries out the reaction GTP + H2O = GDP + phosphate + H(+). In terms of biological role, GTP hydrolase that promotes the GTP-dependent binding of aminoacyl-tRNA to the A-site of ribosomes during protein biosynthesis. This chain is Elongation factor 1-alpha, found in Pyrococcus furiosus (strain ATCC 43587 / DSM 3638 / JCM 8422 / Vc1).